A 524-amino-acid chain; its full sequence is Sterol O-acyltransferase 2 (524 aa).

The disordered stretch occupies residues 1–31 (MEPKAPQLRRRERQGEEQENGACGEGNTRTH). Topologically, residues 1-118 (MEPKAPQLRR…LDELMGVQHF (118 aa)) are cytoplasmic. Cholesterol is bound at residue histidine 117. A helical membrane pass occupies residues 119–140 (RTIYHMFIAGLCVLIISTLAID). Residues 141 to 160 (FIDEGRLMLEFDLLLFSFGQ) are Lumenal-facing. A helical transmembrane segment spans residues 161-186 (LPLALMMWVPMFLSTLLLPYQTLRLW). The Cytoplasmic portion of the chain corresponds to 187-198 (ARPRSGGAWTLG). The helical transmembrane segment at 199–222 (ASLGCVLLAAHAAVLCVLPVHVSV) threads the bilayer. At 223-230 (KHELPPAS) the chain is on the lumenal side. A helical membrane pass occupies residues 231–254 (RCVLVFEQVRFLMKSYSFLRETVP). Residues 255–295 (GIFCVRGGKGICTPSFSSYLYFLFCPTLIYRETYPRTPSIR) lie on the Cytoplasmic side of the membrane. At cysteine 279 the chain carries Cysteine sulfenic acid (-SOH); alternate. A Glycyl cysteine thioester (Cys-Gly) (interchain with G-Cter in ubiquitin); alternate cross-link involves residue cysteine 279. A helical transmembrane segment spans residues 296–328 (WNYVAKNFAQALGCLLYACFILGRLCVPVFANM). At 329-345 (SREPFSTRALLLSILHA) the chain is on the lumenal side. A helical membrane pass occupies residues 346–371 (TGPGIFMLLLIFFAFLHCWLNAFAEM). The Cytoplasmic segment spans residues 372-419 (LRFGDRMFYRDWWNSTSFSNYYRTWNVVVHDWLYSYVYQDGLWLLGRQ). An FYXDWWN motif motif is present at residues 379–385 (FYRDWWN). An acyl-CoA contacts are provided by asparagine 391, arginine 394, asparagine 397, histidine 401, tyrosine 409, and serine 432. The helical transmembrane segment at 420–444 (GRGAAMLGVFLVSALVHEYIFCFVL) threads the bilayer. Histidine 436 is a catalytic residue. Residues 445 to 450 (GFFYPV) lie on the Lumenal side of the membrane. Residues 451-466 (MLILFLVVGGLLNFTM) traverse the membrane as a helical segment. Residues 467–472 (NDRHTG) are Cytoplasmic-facing. Residues 473-504 (PAWNILMWTFLFLGQGIQVSLYCQEWYARRHC) form a helical membrane-spanning segment. Over 505–524 (PLPQPTFWELVTPRSWSCHP) the chain is Lumenal.

The protein belongs to the membrane-bound acyltransferase family. Sterol o-acyltransferase subfamily. In terms of assembly, may form homo- or heterodimers. Interacts with INSIG1; the interaction is direct and promotes association with AMFR/gp78. Polyubiquitinated by AMFR/gp78 at Cys-279, leading to its degradation when the lipid levels are low. Association with AMFR/gp78 is mediated via interaction with INSIG1. High concentration of cholesterol and fatty acid results in Cys-279 oxidation, preventing ubiquitination at the same site, resulting in protein stabilization. Post-translationally, oxidized at Cys-279: high concentration of cholesterol and fatty acid induce reactive oxygen species, which oxidizes Cys-279, preventing ubiquitination at the same site, and resulting in protein stabilization.

Its subcellular location is the endoplasmic reticulum membrane. It catalyses the reaction a sterol + a long-chain fatty acyl-CoA = a long-chain 3-hydroxysterol ester + CoA. The catalysed reaction is cholesterol + an acyl-CoA = a cholesterol ester + CoA. It carries out the reaction cholesterol + (9Z)-octadecenoyl-CoA = cholesteryl (9Z-octadecenoate) + CoA. The enzyme catalyses (5Z,8Z,11Z,14Z,17Z)-eicosapentaenoyl-CoA + cholesterol = (5Z,8Z,11Z,14Z,17Z-eicosapentaenoyl)-cholesterol + CoA. It catalyses the reaction (9Z,12Z,15Z)-octadecatrienoyl-CoA + cholesterol = (9Z,12Z,15Z-octadecatrienoyl)-cholesterol + CoA. The catalysed reaction is (5Z,8Z,11Z,14Z)-eicosatetraenoyl-CoA + cholesterol = cholesteryl (5Z,8Z,11Z,14Z)-eicosatetraenoate + CoA. In terms of biological role, catalyzes the formation of fatty acid-cholesterol esters, which are less soluble in membranes than cholesterol. Plays a role in lipoprotein assembly and dietary cholesterol absorption. Utilizes oleoyl-CoA ((9Z)-octadecenoyl-CoA) and linolenoyl-CoA ((9Z,12Z,15Z)-octadecatrienoyl-CoA) as substrates. May provide cholesteryl esters for lipoprotein secretion from hepatocytes and intestinal mucosa. The protein is Sterol O-acyltransferase 2 of Rattus norvegicus (Rat).